The following is a 455-amino-acid chain: 3-isopropylmalate dehydratase large subunit (455 aa).

[4Fe-4S] cluster is bound by residues cysteine 337, cysteine 397, and cysteine 400.

The protein belongs to the aconitase/IPM isomerase family. LeuC type 1 subfamily. Heterodimer of LeuC and LeuD. Requires [4Fe-4S] cluster as cofactor.

The catalysed reaction is (2R,3S)-3-isopropylmalate = (2S)-2-isopropylmalate. It participates in amino-acid biosynthesis; L-leucine biosynthesis; L-leucine from 3-methyl-2-oxobutanoate: step 2/4. In terms of biological role, catalyzes the isomerization between 2-isopropylmalate and 3-isopropylmalate, via the formation of 2-isopropylmaleate. The sequence is that of 3-isopropylmalate dehydratase large subunit from Leuconostoc citreum (strain KM20).